Reading from the N-terminus, the 262-residue chain is Troponin T, slow skeletal muscle (262 aa).

Acidic residues predominate over residues 1-31; it reads MSDTEEQEYEEEQAEDEEAVEEEEAPEEPEP. 2 disordered regions span residues 1 to 62 and 109 to 153; these read MSDT…ERVD and ERAE…KKKV. Serine 2 carries the phosphoserine; by CK2 modification. Basic and acidic residues predominate over residues 32–41; the sequence is VAEREEERPK. The segment covering 43–55 has biased composition (pro residues); sequence SRPVVPPLIPPKI. Over residues 109–149 the composition is skewed to basic and acidic residues; the sequence is ERAEQQRFRTEKERERQAKLAEEKMRKEEEEAKKRAEDDAK.

It belongs to the troponin T family. As to quaternary structure, interacts with TPM3. In terms of tissue distribution, expressed in adult soleus muscle.

Functionally, troponin T is the tropomyosin-binding subunit of troponin, the thin filament regulatory complex which confers calcium-sensitivity to striated muscle actomyosin ATPase activity. This is Troponin T, slow skeletal muscle (Tnnt1) from Mus musculus (Mouse).